The following is a 367-amino-acid chain: MVTQILGAMESQVGGGPAGPALPNGPLLGTNGATDDSKTNLIVNYLPQNMTQDEFKSLFGSIGDIESCKLVRDKITGQSLGYGFVNYSDPNDADKAINTLNGLKLQTKTIKVSYARPSSASIRDANLYVSGLPKTMSQKEMEQLFSQYGRIITSRILLDQATGVSRGVGFIRFDKRIEAEEAIKGLNGQKPLGAAEPITVKFANNPSQKTGQALLTHLYQSSARRYAGPLHHQTQRFRLDNLLNMAYGVKSPLSLIARFSPIAIDGMSGLAGVGLSGGAAGAGWCIFVYNLSPEADESVLWQLFGPFGAVTNVKVIRDFTTNKCKGFGFVTMTNYDEAAMAIASLNGYRLGERVLQVSFKTSKQHKA.

3 RRM domains span residues 39–117, 125–205, and 284–362; these read TNLI…YARP, ANLY…FANN, and WCIF…FKTS.

The protein belongs to the RRM elav family. As to quaternary structure, interacts with MAP1B light chain LC1. In terms of tissue distribution, brain specific. Expressed in the hippocampus with expression in CA1, CA3 and dentate gyrus.

In terms of biological role, RNA-binding protein that binds to AU-rich element (ARE) sequences of target mRNAs, including VEGF mRNA. May also bind poly-A tracts via RRM 3. May be involved in neuronal differentiation and maintenance. Plays a role in the stabilization of GAP43 mRNA and in spatial learning. This chain is ELAV-like protein 3 (Elavl3), found in Mus musculus (Mouse).